Here is a 393-residue protein sequence, read N- to C-terminus: Tryptophan 2,3-dioxygenase (393 aa).

Substrate contacts are provided by residues 56–60 (FIVTH) and R127. H312 contributes to the heme binding site. A substrate-binding site is contributed by T327.

The protein belongs to the tryptophan 2,3-dioxygenase family. Homotetramer. Dimer of dimers. Requires heme as cofactor.

The enzyme catalyses L-tryptophan + O2 = N-formyl-L-kynurenine. It participates in amino-acid degradation; L-tryptophan degradation via kynurenine pathway; L-kynurenine from L-tryptophan: step 1/2. It functions in the pathway pigment biosynthesis; ommochrome biosynthesis. Its activity is regulated as follows. Stimulated by low concentrations of hydrogen peroxide (5 uM), ascorbate (0.1-0.3 mM), and sodium hydrosulfite (0.1 mM). Inhibited by high concentrations of hydrogen peroxide (0.1 mM), ascorbate (10 mM), and sodium hydrosulfite (1 mM). In terms of biological role, heme-dependent dioxygenase that catalyzes the oxidative cleavage of the L-tryptophan (L-Trp) pyrrole ring and converts L-tryptophan to N-formyl-L-kynurenine. Catalyzes the oxidative cleavage of the indole moiety. This is Tryptophan 2,3-dioxygenase from Aedes aegypti (Yellowfever mosquito).